The following is a 293-amino-acid chain: Oxidoreductase R2 (293 aa).

This sequence belongs to the asaB hydroxylase/desaturase family.

It functions in the pathway secondary metabolite biosynthesis. Functionally, oxidoreductase; part of the gene cluster that mediates the biosynthesis of squalestatin S1 (SQS1, also known as zaragozic acid A), a heavily oxidized fungal polyketide that offers potent cholesterol lowering activity by targeting squalene synthase (SS). SQS1 is composed of a 2,8-dioxobicyclic[3.2.1]octane-3,4,5-tricarboxyclic acid core that is connected to two lipophilic polyketide arms. These initial steps feature the priming of an unusual benzoic acid starter unit onto the highly reducing polyketide synthase pks2, followed by oxaloacetate extension and product release to generate a tricarboxylic acid containing product. The phenylalanine ammonia lyase (PAL) M7 and the acyl-CoA ligase M9 are involved in transforming phenylalanine into benzoyl-CoA. The citrate synthase-like protein R3 is involved in connecting the C-alpha-carbons of the hexaketide chain and oxaloacetate to afford the tricarboxylic acid unit. The potential hydrolytic enzymes, M8 and M10, are in close proximity to pks2 and may participate in product release. On the other side, the tetraketide arm is synthesized by a the squalestatin tetraketide synthase pks1 and enzymatically esterified to the core in the last biosynthetic step, by the acetyltransferase M4. The biosynthesis of the tetraketide must involve 3 rounds of chain extension. After the first and second rounds methyl-transfer occurs, and in all rounds of extension the ketoreductase and dehydratase are active. The enoyl reductase and C-MeT of pks1 are not active in the final round of extension. The acetyltransferase M4 appears to have a broad substrate selectivity for its acyl CoA substrate, allowing the in vitro synthesis of novel squalestatins. The biosynthesis of SQS1 requires several oxidative steps likely performed by oxidoreductases M1, R1 and R2. Finally, in support of the identification of the cluster as being responsible for SQS1 production, the cluster contains a gene encoding a putative squalene synthase (SS) R6, suggesting a likely mechanism for self-resistance. The sequence is that of Oxidoreductase R2 from Phoma sp. (strain ATCC 20986 / MF5453).